Consider the following 80-residue polypeptide: Cell division activator CedA (80 aa).

Belongs to the CedA family.

In terms of biological role, activates the cell division inhibited by chromosomal DNA over-replication. The polypeptide is Cell division activator CedA (Salmonella typhimurium (strain LT2 / SGSC1412 / ATCC 700720)).